Consider the following 346-residue polypeptide: ATP-dependent (S)-NAD(P)H-hydrate dehydratase 2 (346 aa).

The segment at 1-20 is disordered; that stretch reads MMVHSPLATGPHPTTHLEPT. The 312-residue stretch at 28 to 339 folds into the YjeF C-terminal domain; that stretch reads LLRKAFQMIP…GYIGEAFEQV (312 aa). (6S)-NADPHX contacts are provided by residues G135 and 188–194; that span reads NHVEFQR. ATP contacts are provided by residues 228 to 232 and 248 to 257; these read KGSID and GSPKRCGGQG. D258 provides a ligand contact to (6S)-NADPHX.

This sequence belongs to the NnrD/CARKD family. It depends on Mg(2+) as a cofactor.

The protein resides in the cytoplasm. The catalysed reaction is (6S)-NADHX + ATP = ADP + phosphate + NADH + H(+). The enzyme catalyses (6S)-NADPHX + ATP = ADP + phosphate + NADPH + H(+). Catalyzes the dehydration of the S-form of NAD(P)HX at the expense of ATP, which is converted to ADP. Together with NAD(P)HX epimerase, which catalyzes the epimerization of the S- and R-forms, the enzyme allows the repair of both epimers of NAD(P)HX, a damaged form of NAD(P)H that is a result of enzymatic or heat-dependent hydration. The sequence is that of ATP-dependent (S)-NAD(P)H-hydrate dehydratase 2 from Puccinia graminis f. sp. tritici (strain CRL 75-36-700-3 / race SCCL) (Black stem rust fungus).